The following is a 465-amino-acid chain: ATP synthase subunit beta (465 aa).

Residue 153 to 160 (GGAGVGKT) coordinates ATP.

The protein belongs to the ATPase alpha/beta chains family. F-type ATPases have 2 components, CF(1) - the catalytic core - and CF(0) - the membrane proton channel. CF(1) has five subunits: alpha(3), beta(3), gamma(1), delta(1), epsilon(1). CF(0) has three main subunits: a(1), b(2) and c(9-12). The alpha and beta chains form an alternating ring which encloses part of the gamma chain. CF(1) is attached to CF(0) by a central stalk formed by the gamma and epsilon chains, while a peripheral stalk is formed by the delta and b chains.

It is found in the cell membrane. The enzyme catalyses ATP + H2O + 4 H(+)(in) = ADP + phosphate + 5 H(+)(out). In terms of biological role, produces ATP from ADP in the presence of a proton gradient across the membrane. The catalytic sites are hosted primarily by the beta subunits. This chain is ATP synthase subunit beta, found in Clostridium perfringens (strain ATCC 13124 / DSM 756 / JCM 1290 / NCIMB 6125 / NCTC 8237 / Type A).